Reading from the N-terminus, the 308-residue chain is RING-H2 finger protein ATL63 (308 aa).

Residues 29–49 (VLLAALVFLLLVVLFVLLLHF) form a helical membrane-spanning segment. An RING-type; atypical zinc finger spans residues 138–180 (CVICLGLWEAGDFGRKLRNCGHGFHVECIDMWLSSHSTCPLCR). Residues 252 to 308 (VFDDDEEINDGGTRSDRRRSMSMTSSASSSLMRMLSSSSSRSERNKVFPTARQDSSK) are disordered. Low complexity predominate over residues 272 to 291 (MSMTSSASSSLMRMLSSSSS).

This sequence belongs to the RING-type zinc finger family. ATL subfamily.

It is found in the membrane. It carries out the reaction S-ubiquitinyl-[E2 ubiquitin-conjugating enzyme]-L-cysteine + [acceptor protein]-L-lysine = [E2 ubiquitin-conjugating enzyme]-L-cysteine + N(6)-ubiquitinyl-[acceptor protein]-L-lysine.. The protein operates within protein modification; protein ubiquitination. The chain is RING-H2 finger protein ATL63 (ATL63) from Arabidopsis thaliana (Mouse-ear cress).